Reading from the N-terminus, the 376-residue chain is Alpha-2,8-sialyltransferase 8E (376 aa).

A helical membrane pass occupies residues 17 to 37 (TLLFIFICAFALVTLLQQILY). N-linked (GlcNAc...) asparagine glycosylation occurs at N56. 2 cysteine pairs are disulfide-bonded: C164/C313 and C178/C373. Residues N192 and 214 to 216 (NPS) contribute to the substrate site. N241 carries N-linked (GlcNAc...) asparagine glycosylation. Residue 300 to 302 (STG) coordinates substrate. The Proton donor/acceptor role is filled by H348.

This sequence belongs to the glycosyltransferase 29 family. In terms of tissue distribution, expressed in liver.

The protein resides in the golgi apparatus membrane. The catalysed reaction is a ganglioside GT1b (d18:1(4E)) + CMP-N-acetyl-beta-neuraminate = a ganglioside GQ1b (d18:1(4E)) + CMP + H(+). It catalyses the reaction a ganglioside GQ1c (d18:1(4E)) + CMP-N-acetyl-beta-neuraminate = a ganglioside GP1c (d18:1(4E)) + CMP + H(+). It carries out the reaction a ganglioside GD3 (d18:1(4E)) + CMP-N-acetyl-beta-neuraminate = a ganglioside GT3 (d18:1(4E)) + CMP + H(+). The enzyme catalyses a ganglioside GD1a (d18:1(4E)) + CMP-N-acetyl-beta-neuraminate = a ganglioside GT1a (d18:1(4E)) + CMP + H(+). The catalysed reaction is a ganglioside GM1b (d18:1(4E)) + CMP-N-acetyl-beta-neuraminate = a ganglioside GD1c (d18:1(4E)) + CMP + H(+). It participates in protein modification; protein glycosylation. Functionally, involved in the synthesis of gangliosides GD1c, GT1a, GQ1b, GP1c and GT3 from GD1a, GT1b, GM1b and GD3 respectively. The sequence is that of Alpha-2,8-sialyltransferase 8E from Rattus norvegicus (Rat).